The sequence spans 544 residues: Chaperonin GroEL 1 (544 aa).

ATP contacts are provided by residues 29 to 32 (TLGP), 86 to 90 (DGTTT), glycine 413, and aspartate 495. Positions 525–544 (PEPKTNTPASSGSGMSDYDY) are disordered. A compositionally biased stretch (polar residues) spans 528–538 (KTNTPASSGSG).

It belongs to the chaperonin (HSP60) family. In terms of assembly, forms a cylinder of 14 subunits composed of two heptameric rings stacked back-to-back. Interacts with the co-chaperonin GroES.

Its subcellular location is the cytoplasm. It carries out the reaction ATP + H2O + a folded polypeptide = ADP + phosphate + an unfolded polypeptide.. Functionally, together with its co-chaperonin GroES, plays an essential role in assisting protein folding. The GroEL-GroES system forms a nano-cage that allows encapsulation of the non-native substrate proteins and provides a physical environment optimized to promote and accelerate protein folding. The protein is Chaperonin GroEL 1 of Synechococcus sp. (strain JA-2-3B'a(2-13)) (Cyanobacteria bacterium Yellowstone B-Prime).